Reading from the N-terminus, the 447-residue chain is Tubulin beta-5 chain (447 aa).

Positions 11, 69, 138, 142, 143, 144, 204, and 226 each coordinate GTP. Residue E69 participates in Mg(2+) binding. The tract at residues 421–447 (EYQQYQDATADDEEEDYGDEEEDEVAA) is disordered. Positions 429-447 (TADDEEEDYGDEEEDEVAA) are enriched in acidic residues.

The protein belongs to the tubulin family. In terms of assembly, dimer of alpha and beta chains. A typical microtubule is a hollow water-filled tube with an outer diameter of 25 nm and an inner diameter of 15 nM. Alpha-beta heterodimers associate head-to-tail to form protofilaments running lengthwise along the microtubule wall with the beta-tubulin subunit facing the microtubule plus end conferring a structural polarity. Microtubules usually have 13 protofilaments but different protofilament numbers can be found in some organisms and specialized cells. Mg(2+) serves as cofactor. Expressed in roots, leaf sheaths, and suspension cultured cells.

The protein resides in the cytoplasm. It is found in the cytoskeleton. Its function is as follows. Tubulin is the major constituent of microtubules, a cylinder consisting of laterally associated linear protofilaments composed of alpha- and beta-tubulin heterodimers. Microtubules grow by the addition of GTP-tubulin dimers to the microtubule end, where a stabilizing cap forms. Below the cap, tubulin dimers are in GDP-bound state, owing to GTPase activity of alpha-tubulin. The chain is Tubulin beta-5 chain (TUBB5) from Oryza sativa subsp. japonica (Rice).